The primary structure comprises 298 residues: N-acetylmuramic acid 6-phosphate etherase 2 (298 aa).

Residues 51 to 214 (IVSRFEQGGR…STAAMVRLGR (164 aa)) enclose the SIS domain. The active-site Proton donor is Glu79. Glu110 is an active-site residue.

It belongs to the GCKR-like family. MurNAc-6-P etherase subfamily. Homodimer.

It catalyses the reaction N-acetyl-D-muramate 6-phosphate + H2O = N-acetyl-D-glucosamine 6-phosphate + (R)-lactate. The protein operates within amino-sugar metabolism; N-acetylmuramate degradation. In terms of biological role, specifically catalyzes the cleavage of the D-lactyl ether substituent of MurNAc 6-phosphate, producing GlcNAc 6-phosphate and D-lactate. In Bacillus licheniformis (strain ATCC 14580 / DSM 13 / JCM 2505 / CCUG 7422 / NBRC 12200 / NCIMB 9375 / NCTC 10341 / NRRL NRS-1264 / Gibson 46), this protein is N-acetylmuramic acid 6-phosphate etherase 2.